The primary structure comprises 478 residues: Cobyric acid synthase (478 aa).

The GATase cobBQ-type domain maps to 250 to 437 (QLRVVVPVLP…VHGVFDHPMH (188 aa)). Cys-331 acts as the Nucleophile in catalysis. The active site involves His-429.

It belongs to the CobB/CobQ family. CobQ subfamily.

The protein operates within cofactor biosynthesis; adenosylcobalamin biosynthesis. Catalyzes amidations at positions B, D, E, and G on adenosylcobyrinic A,C-diamide. NH(2) groups are provided by glutamine, and one molecule of ATP is hydrogenolyzed for each amidation. The polypeptide is Cobyric acid synthase (Xanthomonas euvesicatoria pv. vesicatoria (strain 85-10) (Xanthomonas campestris pv. vesicatoria)).